The chain runs to 688 residues: G protein-coupled receptor kinase 3 (688 aa).

Residues 1 to 190 (MADLEAVLAD…ELNIHLSMND (190 aa)) form an N-terminal region. The region spanning 54–175 (TFDKIFNQKI…MESDKFTRFC (122 aa)) is the RGS domain. A Protein kinase domain is found at 191–453 (FSVHRIIGRG…ARELKEHIFF (263 aa)). ATP contacts are provided by residues 197–205 (IGRGGFGEV) and Lys220. The active-site Proton acceptor is the Asp317. An AGC-kinase C-terminal domain is found at 454 to 521 (KGIDWQHVYL…VISERWQQEV (68 aa)). Residues 558–652 (DCIMHGYMLK…WLKELTCTFN (95 aa)) enclose the PH domain.

It belongs to the protein kinase superfamily. AGC Ser/Thr protein kinase family. GPRK subfamily. As to quaternary structure, interacts with GIT1. Ubiquitinated.

Its subcellular location is the postsynapse. The protein localises to the presynapse. The enzyme catalyses [beta-adrenergic receptor] + ATP = [beta-adrenergic receptor]-phosphate + ADP + H(+). Specifically phosphorylates the agonist-occupied form of the beta-adrenergic and closely related receptors. In Mus musculus (Mouse), this protein is G protein-coupled receptor kinase 3.